A 383-amino-acid chain; its full sequence is Lipid-A-disaccharide synthase (383 aa).

The protein belongs to the LpxB family.

The enzyme catalyses a lipid X + a UDP-2-N,3-O-bis[(3R)-3-hydroxyacyl]-alpha-D-glucosamine = a lipid A disaccharide + UDP + H(+). It participates in bacterial outer membrane biogenesis; LPS lipid A biosynthesis. Functionally, condensation of UDP-2,3-diacylglucosamine and 2,3-diacylglucosamine-1-phosphate to form lipid A disaccharide, a precursor of lipid A, a phosphorylated glycolipid that anchors the lipopolysaccharide to the outer membrane of the cell. The protein is Lipid-A-disaccharide synthase of Trichlorobacter lovleyi (strain ATCC BAA-1151 / DSM 17278 / SZ) (Geobacter lovleyi).